We begin with the raw amino-acid sequence, 255 residues long: 3-dehydroquinate dehydratase (255 aa).

3-dehydroquinate contacts are provided by residues 46–48 (EWR) and R82. H143 acts as the Proton donor/acceptor in catalysis. Residue K170 is the Schiff-base intermediate with substrate of the active site. 3-dehydroquinate contacts are provided by R213, S232, and Q236.

The protein belongs to the type-I 3-dehydroquinase family. Homodimer.

The catalysed reaction is 3-dehydroquinate = 3-dehydroshikimate + H2O. It participates in metabolic intermediate biosynthesis; chorismate biosynthesis; chorismate from D-erythrose 4-phosphate and phosphoenolpyruvate: step 3/7. Functionally, involved in the third step of the chorismate pathway, which leads to the biosynthesis of aromatic amino acids. Catalyzes the cis-dehydration of 3-dehydroquinate (DHQ) and introduces the first double bond of the aromatic ring to yield 3-dehydroshikimate. The protein is 3-dehydroquinate dehydratase of Bacillus subtilis (strain 168).